Here is a 320-residue protein sequence, read N- to C-terminus: NADH-ubiquinone oxidoreductase chain 1 (320 aa).

8 consecutive transmembrane segments (helical) span residues 3 to 23, 72 to 92, 103 to 123, 147 to 167, 174 to 194, 226 to 246, 255 to 275, and 295 to 315; these read LITI…VAFL, ILLI…WTPI, LGFL…LWAG, VTLG…TMQL, HIWL…STLA, FFLA…ILFI, ELFL…FLWI, and FLPL…SISG.

It belongs to the complex I subunit 1 family.

The protein localises to the mitochondrion inner membrane. It catalyses the reaction a ubiquinone + NADH + 5 H(+)(in) = a ubiquinol + NAD(+) + 4 H(+)(out). In terms of biological role, core subunit of the mitochondrial membrane respiratory chain NADH dehydrogenase (Complex I) that is believed to belong to the minimal assembly required for catalysis. Complex I functions in the transfer of electrons from NADH to the respiratory chain. The immediate electron acceptor for the enzyme is believed to be ubiquinone. The sequence is that of NADH-ubiquinone oxidoreductase chain 1 (MT-ND1) from Varanus jobiensis (Peach throat monitor).